The chain runs to 159 residues: uncharacterized protein (159 aa).

Positions 4-153 (IKTDDLTHPA…HSRFLSLTLC (150 aa)) constitute an N-acetyltransferase domain.

It belongs to the acetyltransferase family.

This is an uncharacterized protein from Escherichia coli (strain K12).